Reading from the N-terminus, the 66-residue chain is Alpha-conotoxin GIB (66 aa).

The signal sequence occupies residues 1 to 21 (MGMRMMFTVFLLVVLATTVVS). Positions 22–49 (FPSERASDGRDDTAKDEGSDMEKLVEKK) are excised as a propeptide. Disulfide bonds link Cys51–Cys56 and Cys52–Cys62. Position 64 is a glycine amide (Gly64).

The protein belongs to the conotoxin A superfamily. Expressed by the venom duct.

It localises to the secreted. In terms of biological role, alpha-conotoxins act on postsynaptic membranes, they bind to the nicotinic acetylcholine receptors (nAChR) and thus inhibit them. Both the globular (with C1-C3; C2-C4 disulfide pattern) and ribbon (C1-C4; C2-C3) isomers reversibly inhibit human muscle-type alpha-1-beta-1-delta-epsilon/CHRNA1-CHRNB1-CHRND-CHRNE nAChRs (IC(50)=116 nM and IC(50)=643 nM, respectively). Both isomers also inhibit alpha-7/CHRNA7 and alpha-9-alpha-10/CHRNA9-CHRNA10 (IC(50)=1113 nM by globular isomer) nAChRs. The polypeptide is Alpha-conotoxin GIB (Conus geographus (Geography cone)).